A 58-amino-acid polypeptide reads, in one-letter code: Large ribosomal subunit protein bL32c (58 aa).

Disordered regions lie at residues 1–21 (MAVP…SQWM) and 34–58 (LAGR…MQPN). Low complexity predominate over residues 44-58 (QMQPTQMQPTQMQPN).

This sequence belongs to the bacterial ribosomal protein bL32 family.

Its subcellular location is the plastid. The protein localises to the chloroplast. This is Large ribosomal subunit protein bL32c from Cyanidioschyzon merolae (strain NIES-3377 / 10D) (Unicellular red alga).